We begin with the raw amino-acid sequence, 209 residues long: uncharacterized protein (209 aa).

Disordered stretches follow at residues 1-80 (MFVR…PPVE) and 164-197 (LPAG…PGME). The span at 178 to 189 (SRGSSRSSCSQR) shows a compositional bias: low complexity.

This is an uncharacterized protein from Homo sapiens (Human).